Reading from the N-terminus, the 159-residue chain is MDFLTADLCDEFSDRLQILAPGYASFGGHARFAGRIATLKVFEDNSRVREMLSEPGEGRVLVVDGGGSRRCALVGDQLGALAVRNGWAGIVVYGCIRDSVALGLLPLGVRALATHPLKSVKNGVGERELAVTFDGATFRPGDWLYADEDGVITSPDPLL.

Residues 75-78 and Arg-97 each bind substrate; that span reads GDQL. An a divalent metal cation-binding site is contributed by Asp-98.

It belongs to the class II aldolase/RraA-like family. As to quaternary structure, homotrimer. A divalent metal cation serves as cofactor.

The enzyme catalyses 4-hydroxy-4-methyl-2-oxoglutarate = 2 pyruvate. It carries out the reaction oxaloacetate + H(+) = pyruvate + CO2. In terms of biological role, catalyzes the aldol cleavage of 4-hydroxy-4-methyl-2-oxoglutarate (HMG) into 2 molecules of pyruvate. Also contains a secondary oxaloacetate (OAA) decarboxylase activity due to the common pyruvate enolate transition state formed following C-C bond cleavage in the retro-aldol and decarboxylation reactions. In Laribacter hongkongensis (strain HLHK9), this protein is Putative 4-hydroxy-4-methyl-2-oxoglutarate aldolase.